We begin with the raw amino-acid sequence, 209 residues long: Imidazole glycerol phosphate synthase subunit HisH (209 aa).

In terms of domain architecture, Glutamine amidotransferase type-1 spans 1–205 (MIAIIDYGMG…QGVVEAWKSS (205 aa)). The Nucleophile role is filled by Cys79. Residues His180 and Glu182 contribute to the active site.

In terms of assembly, heterodimer of HisH and HisF.

It is found in the cytoplasm. The enzyme catalyses 5-[(5-phospho-1-deoxy-D-ribulos-1-ylimino)methylamino]-1-(5-phospho-beta-D-ribosyl)imidazole-4-carboxamide + L-glutamine = D-erythro-1-(imidazol-4-yl)glycerol 3-phosphate + 5-amino-1-(5-phospho-beta-D-ribosyl)imidazole-4-carboxamide + L-glutamate + H(+). It carries out the reaction L-glutamine + H2O = L-glutamate + NH4(+). It participates in amino-acid biosynthesis; L-histidine biosynthesis; L-histidine from 5-phospho-alpha-D-ribose 1-diphosphate: step 5/9. IGPS catalyzes the conversion of PRFAR and glutamine to IGP, AICAR and glutamate. The HisH subunit catalyzes the hydrolysis of glutamine to glutamate and ammonia as part of the synthesis of IGP and AICAR. The resulting ammonia molecule is channeled to the active site of HisF. The polypeptide is Imidazole glycerol phosphate synthase subunit HisH (Bacillus cereus (strain B4264)).